Reading from the N-terminus, the 216-residue chain is Protein-L-isoaspartate O-methyltransferase (216 aa).

Residue Ser-61 is part of the active site.

Belongs to the methyltransferase superfamily. L-isoaspartyl/D-aspartyl protein methyltransferase family.

The protein localises to the cytoplasm. It catalyses the reaction [protein]-L-isoaspartate + S-adenosyl-L-methionine = [protein]-L-isoaspartate alpha-methyl ester + S-adenosyl-L-homocysteine. Functionally, catalyzes the methyl esterification of L-isoaspartyl residues in peptides and proteins that result from spontaneous decomposition of normal L-aspartyl and L-asparaginyl residues. It plays a role in the repair and/or degradation of damaged proteins. In Pyrococcus abyssi (strain GE5 / Orsay), this protein is Protein-L-isoaspartate O-methyltransferase (pcm).